Here is a 370-residue protein sequence, read N- to C-terminus: Dual-specificity RNA methyltransferase RlmN (370 aa).

Catalysis depends on E97, which acts as the Proton acceptor. The 238-residue stretch at 103–340 folds into the Radical SAM core domain; sequence EKSRGTLCIS…CTVRRTRGDD (238 aa). A disulfide bridge links C110 with C345. C117, C121, and C124 together coordinate [4Fe-4S] cluster. S-adenosyl-L-methionine is bound by residues 170-171, S202, 224-226, and N302; these read GE and SLH. C345 acts as the S-methylcysteine intermediate in catalysis.

The protein belongs to the radical SAM superfamily. RlmN family. The cofactor is [4Fe-4S] cluster.

It is found in the cytoplasm. The enzyme catalyses adenosine(2503) in 23S rRNA + 2 reduced [2Fe-2S]-[ferredoxin] + 2 S-adenosyl-L-methionine = 2-methyladenosine(2503) in 23S rRNA + 5'-deoxyadenosine + L-methionine + 2 oxidized [2Fe-2S]-[ferredoxin] + S-adenosyl-L-homocysteine. It catalyses the reaction adenosine(37) in tRNA + 2 reduced [2Fe-2S]-[ferredoxin] + 2 S-adenosyl-L-methionine = 2-methyladenosine(37) in tRNA + 5'-deoxyadenosine + L-methionine + 2 oxidized [2Fe-2S]-[ferredoxin] + S-adenosyl-L-homocysteine. Specifically methylates position 2 of adenine 2503 in 23S rRNA and position 2 of adenine 37 in tRNAs. m2A2503 modification seems to play a crucial role in the proofreading step occurring at the peptidyl transferase center and thus would serve to optimize ribosomal fidelity. This chain is Dual-specificity RNA methyltransferase RlmN, found in Hydrogenovibrio crunogenus (strain DSM 25203 / XCL-2) (Thiomicrospira crunogena).